The following is a 365-amino-acid chain: GTPase Obg (365 aa).

The Obg domain maps to E2 to L160. In terms of domain architecture, OBG-type G spans A161–F329. GTP contacts are provided by residues G167–S174, F192–S196, D215–G218, N282–D285, and S310–D312. Mg(2+) contacts are provided by S174 and T194.

It belongs to the TRAFAC class OBG-HflX-like GTPase superfamily. OBG GTPase family. Monomer. It depends on Mg(2+) as a cofactor.

It is found in the cytoplasm. Its function is as follows. An essential GTPase which binds GTP, GDP and possibly (p)ppGpp with moderate affinity, with high nucleotide exchange rates and a fairly low GTP hydrolysis rate. Plays a role in control of the cell cycle, stress response, ribosome biogenesis and in those bacteria that undergo differentiation, in morphogenesis control. The protein is GTPase Obg of Leptospira borgpetersenii serovar Hardjo-bovis (strain JB197).